Reading from the N-terminus, the 257-residue chain is NAD-capped RNA hydrolase NudC (257 aa).

Arginine 69 provides a ligand contact to substrate. Zn(2+) contacts are provided by cysteine 98 and cysteine 101. Glutamate 111 serves as a coordination point for substrate. The Zn(2+) site is built by cysteine 116 and cysteine 119. Position 124 (tyrosine 124) interacts with substrate. The Nudix hydrolase domain maps to 125–248; that stretch reads PQIAPCIIVA…TVARRLIEDT (124 aa). 3 residues coordinate a divalent metal cation: alanine 158, glutamate 174, and glutamate 178. A Nudix box motif is present at residues 159–180; sequence GFVEVGETLEQAVAREVMEESG. A substrate-binding site is contributed by 192 to 199; that stretch reads QPWPFPQS. An a divalent metal cation-binding site is contributed by glutamate 219. A substrate-binding site is contributed by alanine 241.

The protein belongs to the Nudix hydrolase family. NudC subfamily. Homodimer. Mg(2+) is required as a cofactor. It depends on Mn(2+) as a cofactor. Requires Zn(2+) as cofactor.

It catalyses the reaction a 5'-end NAD(+)-phospho-ribonucleoside in mRNA + H2O = a 5'-end phospho-adenosine-phospho-ribonucleoside in mRNA + beta-nicotinamide D-ribonucleotide + 2 H(+). The catalysed reaction is NAD(+) + H2O = beta-nicotinamide D-ribonucleotide + AMP + 2 H(+). The enzyme catalyses NADH + H2O = reduced beta-nicotinamide D-ribonucleotide + AMP + 2 H(+). Functionally, mRNA decapping enzyme that specifically removes the nicotinamide adenine dinucleotide (NAD) cap from a subset of mRNAs by hydrolyzing the diphosphate linkage to produce nicotinamide mononucleotide (NMN) and 5' monophosphate mRNA. The NAD-cap is present at the 5'-end of some mRNAs and stabilizes RNA against 5'-processing. Has preference for mRNAs with a 5'-end purine. Catalyzes the hydrolysis of a broad range of dinucleotide pyrophosphates. The sequence is that of NAD-capped RNA hydrolase NudC from Salmonella dublin (strain CT_02021853).